A 424-amino-acid polypeptide reads, in one-letter code: MATPSLDSARAADAAIEKAPDLLPEALPGRRPSLVGLTRDALKAQLIGMGVPERESRMRAGQVWHWVNFRGASDFAEMTNVGKALKAQLAEHFTLERPEVASRQVSRDGTRKWLLRMAPTNRQEHNRGAEIECVYIPGPDRGTLCVSSQVGCTLTCSFCHTGTQRLVRNLSAAEIVQQLVTARDELGDWPGQMPSRDAGGSGEVGRLVTNIVFMGMGEPLYNLDAVVDAVGVMSDQEGLGLSRRRITVSTSGVVPQIPRLGEQANAMLAISLHAVRDDLRDELVPLNRKYPIAELLAACRAYPGLSNARRITFEYVMLKGVNDSDADARELVRLLKGIPAKINLIPFNPWPGSRYECSDWDRIERFSEIVFNAGYASPVRTPRGRDILAACGQLKSETEKLRARARLMQEEGIGVESFYAGADD.

The Proton acceptor role is filled by Glu132. In terms of domain architecture, Radical SAM core spans 138 to 388 (GPDRGTLCVS…VRTPRGRDIL (251 aa)). Cys145 and Cys391 are disulfide-bonded. Residues Cys152, Cys156, and Cys159 each contribute to the [4Fe-4S] cluster site. S-adenosyl-L-methionine-binding positions include 217-218 (GE), Ser249, 271-273 (SLH), and Asn348. The active-site S-methylcysteine intermediate is the Cys391.

It belongs to the radical SAM superfamily. RlmN family. Requires [4Fe-4S] cluster as cofactor.

It is found in the cytoplasm. The enzyme catalyses adenosine(2503) in 23S rRNA + 2 reduced [2Fe-2S]-[ferredoxin] + 2 S-adenosyl-L-methionine = 2-methyladenosine(2503) in 23S rRNA + 5'-deoxyadenosine + L-methionine + 2 oxidized [2Fe-2S]-[ferredoxin] + S-adenosyl-L-homocysteine. The catalysed reaction is adenosine(37) in tRNA + 2 reduced [2Fe-2S]-[ferredoxin] + 2 S-adenosyl-L-methionine = 2-methyladenosine(37) in tRNA + 5'-deoxyadenosine + L-methionine + 2 oxidized [2Fe-2S]-[ferredoxin] + S-adenosyl-L-homocysteine. Its function is as follows. Specifically methylates position 2 of adenine 2503 in 23S rRNA and position 2 of adenine 37 in tRNAs. m2A2503 modification seems to play a crucial role in the proofreading step occurring at the peptidyl transferase center and thus would serve to optimize ribosomal fidelity. This Methylobacterium radiotolerans (strain ATCC 27329 / DSM 1819 / JCM 2831 / NBRC 15690 / NCIMB 10815 / 0-1) protein is Dual-specificity RNA methyltransferase RlmN.